The sequence spans 414 residues: tRNA methyltransferase 10 homolog C (414 aa).

Residues 1–35 (MNVTVRFLRPFARCLVPYTFHRKRSHLYSGVLQRY) constitute a mitochondrion transit peptide. Ser79 is subject to Phosphoserine. Residues 133 to 171 (GKEKAKKAKQVKKEMKAEAREEAKRARLLETTAEEQQQD) adopt a coiled-coil conformation. The 193-residue stretch at 186 to 378 (LGWKGVQAMQ…KFVPRRKHTG (193 aa)) folds into the SAM-dependent MTase TRM10-type domain.

The protein belongs to the class IV-like SAM-binding methyltransferase superfamily. TRM10 family. In terms of assembly, component of mitochondrial ribonuclease P, a complex composed of TRMT10C/MRPP1, HSD17B10/MRPP2 and PRORP/MRPP3. Interacts with HSD17B10/MRPP2; forming the MRPP1-MRPP2 subcomplex of the mitochondrial ribonuclease P complex. Interacts with GRSF1.

The protein resides in the mitochondrion matrix. Its subcellular location is the mitochondrion nucleoid. The catalysed reaction is adenosine(9) in tRNA + S-adenosyl-L-methionine = N(1)-methyladenosine(9) in tRNA + S-adenosyl-L-homocysteine + H(+). It carries out the reaction guanosine(9) in tRNA + S-adenosyl-L-methionine = N(1)-methylguanosine(9) in tRNA + S-adenosyl-L-homocysteine + H(+). It catalyses the reaction an adenosine in mRNA + S-adenosyl-L-methionine = an N(1)-methyladenosine in mRNA + S-adenosyl-L-homocysteine + H(+). In terms of biological role, mitochondrial tRNA N(1)-methyltransferase involved in mitochondrial tRNA maturation. Component of mitochondrial ribonuclease P, a complex composed of TRMT10C/MRPP1, HSD17B10/MRPP2 and PRORP/MRPP3, which cleaves tRNA molecules in their 5'-ends. Together with HSD17B10/MRPP2, forms a subcomplex of the mitochondrial ribonuclease P, named MRPP1-MRPP2 subcomplex, which displays functions that are independent of the ribonuclease P activity. The MRPP1-MRPP2 subcomplex catalyzes the formation of N(1)-methylguanine and N(1)-methyladenine at position 9 (m1G9 and m1A9, respectively) in tRNAs; TRMT10C/MRPP1 acting as the catalytic N(1)-methyltransferase subunit. The MRPP1-MRPP2 subcomplex also acts as a tRNA maturation platform: following 5'-end cleavage by the mitochondrial ribonuclease P complex, the MRPP1-MRPP2 subcomplex enhances the efficiency of 3'-processing catalyzed by ELAC2, retains the tRNA product after ELAC2 processing and presents the nascent tRNA to the mitochondrial CCA tRNA nucleotidyltransferase TRNT1 enzyme. In addition to tRNA N(1)-methyltransferase activity, TRMT10C/MRPP1 also acts as a mRNA N(1)-methyltransferase by mediating methylation of adenosine residues at the N(1) position of MT-ND5 mRNA. Associates with mitochondrial DNA complexes at the nucleoids to initiate RNA processing and ribosome assembly. This Mus musculus (Mouse) protein is tRNA methyltransferase 10 homolog C.